We begin with the raw amino-acid sequence, 444 residues long: ATP-dependent protease ATPase subunit HslU (444 aa).

ATP-binding positions include Val-18, Gly-60–Glu-65, Asp-258, Glu-323, and Arg-395.

The protein belongs to the ClpX chaperone family. HslU subfamily. In terms of assembly, a double ring-shaped homohexamer of HslV is capped on each side by a ring-shaped HslU homohexamer. The assembly of the HslU/HslV complex is dependent on binding of ATP.

The protein resides in the cytoplasm. ATPase subunit of a proteasome-like degradation complex; this subunit has chaperone activity. The binding of ATP and its subsequent hydrolysis by HslU are essential for unfolding of protein substrates subsequently hydrolyzed by HslV. HslU recognizes the N-terminal part of its protein substrates and unfolds these before they are guided to HslV for hydrolysis. This Thioalkalivibrio sulfidiphilus (strain HL-EbGR7) protein is ATP-dependent protease ATPase subunit HslU.